The chain runs to 300 residues: 4-hydroxy-tetrahydrodipicolinate synthase (300 aa).

Threonine 49 contributes to the pyruvate binding site. The Proton donor/acceptor role is filled by tyrosine 137. Lysine 166 functions as the Schiff-base intermediate with substrate in the catalytic mechanism. Isoleucine 208 serves as a coordination point for pyruvate.

The protein belongs to the DapA family. In terms of assembly, homotetramer; dimer of dimers.

It localises to the cytoplasm. The enzyme catalyses L-aspartate 4-semialdehyde + pyruvate = (2S,4S)-4-hydroxy-2,3,4,5-tetrahydrodipicolinate + H2O + H(+). It participates in amino-acid biosynthesis; L-lysine biosynthesis via DAP pathway; (S)-tetrahydrodipicolinate from L-aspartate: step 3/4. In terms of biological role, catalyzes the condensation of (S)-aspartate-beta-semialdehyde [(S)-ASA] and pyruvate to 4-hydroxy-tetrahydrodipicolinate (HTPA). The sequence is that of 4-hydroxy-tetrahydrodipicolinate synthase from Methanopyrus kandleri (strain AV19 / DSM 6324 / JCM 9639 / NBRC 100938).